Consider the following 446-residue polypeptide: N-succinylarginine dihydrolase (446 aa).

Substrate-binding positions include 19-28 (AGLSFGNEAS), N110, and 137-138 (HR). E174 is an active-site residue. R213 contacts substrate. H249 is an active-site residue. Substrate-binding residues include D251 and N364. C370 acts as the Nucleophile in catalysis.

The protein belongs to the succinylarginine dihydrolase family. As to quaternary structure, homodimer.

The enzyme catalyses N(2)-succinyl-L-arginine + 2 H2O + 2 H(+) = N(2)-succinyl-L-ornithine + 2 NH4(+) + CO2. Its pathway is amino-acid degradation; L-arginine degradation via AST pathway; L-glutamate and succinate from L-arginine: step 2/5. Functionally, catalyzes the hydrolysis of N(2)-succinylarginine into N(2)-succinylornithine, ammonia and CO(2). The chain is N-succinylarginine dihydrolase from Acinetobacter baylyi (strain ATCC 33305 / BD413 / ADP1).